Consider the following 448-residue polypeptide: MAHIAFDRSKLTPFIHDNELGEMQAMVNAADAQLRQGTGAGSDFRDWLTLPKDYDKAEFARIKAAAKKIRSDSEVFIVIGIGGSYLGAKMAVDFLHDTFFNTLPAEKRQGPQVFFAGNSISPDYLHDLINLIGDRDFSVNVISKSGTTTEPSIAFRIFKDMLIKKYGEEGAKSRIYATTDKQRGALKTEADAAGYETFVIPDGVGGRYSVLTAVGLLPIAASGADIDQLMQGAADAQETYTDPDLTKNEAYQYAATRNILYRKGYTTELLENYEPRLQYFAEWWKQLTGESEGKDQKGIYPSSANFSTDLHSLGQYIQEGLRNLMETVVVVDKPQNDVTVPSAEDDLDGLKYLEGKPMSFVNQKAYEGVVLAHTDGGVPNMSVHIPDQTPYTLGYLIYFFEVAVAVSGYLNGINPFNQPGVEAYKTNMFALLGKPGFEDLGKELNARL.

The Proton donor role is filled by Glu-290. Active-site residues include His-311 and Lys-425.

This sequence belongs to the GPI family.

Its subcellular location is the cytoplasm. The catalysed reaction is alpha-D-glucose 6-phosphate = beta-D-fructose 6-phosphate. The protein operates within carbohydrate biosynthesis; gluconeogenesis. It participates in carbohydrate degradation; glycolysis; D-glyceraldehyde 3-phosphate and glycerone phosphate from D-glucose: step 2/4. Its function is as follows. Catalyzes the reversible isomerization of glucose-6-phosphate to fructose-6-phosphate. This Levilactobacillus brevis (strain ATCC 367 / BCRC 12310 / CIP 105137 / JCM 1170 / LMG 11437 / NCIMB 947 / NCTC 947) (Lactobacillus brevis) protein is Glucose-6-phosphate isomerase.